Reading from the N-terminus, the 261-residue chain is Guanine nucleotide exchange factor BopE (261 aa).

Basic and acidic residues predominate over residues 241–253 (RRAAQDASRDEKG). Residues 241–261 (RRAAQDASRDEKGAANAADGA) are disordered.

Belongs to the GEF (guanine exchange factor) SopE family. Monomer. Interacts with human CDC42.

The protein localises to the secreted. Functionally, activator for both CDC42 and RAC1 by directly interacting with these Rho GTPases and acting as a guanine nucleotide exchange factor (GEF). This activation results in actin cytoskeleton rearrangements and stimulates membrane ruffling, thus promoting bacterial entry into non-phagocytic cells. This chain is Guanine nucleotide exchange factor BopE (bopE), found in Burkholderia thailandensis (strain ATCC 700388 / DSM 13276 / CCUG 48851 / CIP 106301 / E264).